Reading from the N-terminus, the 139-residue chain is MVQRLTLRRRLSYNTKSNKRRVVRTPGGRLVYLYVKKQRTVPKCGQCKEKLSGIKPSRPSERPRMCRRLKTVTRTFGGVLCHRCLRERIIRAFLIDEQKVVKVLKAQQLGKPVSKPPKIAKAPAAAAAAKPAKTATKSK.

Positions 113 to 139 (VSKPPKIAKAPAAAAAAKPAKTATKSK) are disordered.

It belongs to the eukaryotic ribosomal protein eL34 family.

The chain is Large ribosomal subunit protein eL34 (RpL34) from Ochlerotatus triseriatus (Eastern treehole mosquito).